A 273-amino-acid chain; its full sequence is Anthocyanin regulatory C1 protein (273 aa).

2 consecutive HTH myb-type domains span residues K9–I65 and R66–A116. 2 consecutive DNA-binding regions (H-T-H motif) follow at residues W37–L61 and W89–L112. Disordered stretches follow at residues A137 to T164 and A196 to C220. The segment covering A204–A214 has biased composition (gly residues).

The protein localises to the nucleus. Functionally, controls the expression of genes involved in anthocyanin biosynthesis. Regulates the expression of at least 3 structural genes: chalcone synthase, dihydroflavonol reductase and flavonol O(3) glucosyltransferase. C1 acts as a trans-acting factor. The protein is Anthocyanin regulatory C1 protein (C1) of Zea mays (Maize).